Here is a 97-residue protein sequence, read N- to C-terminus: Putative membrane protein insertion efficiency factor (97 aa).

Belongs to the UPF0161 family.

It is found in the cell membrane. In terms of biological role, could be involved in insertion of integral membrane proteins into the membrane. This Lactobacillus gasseri (strain ATCC 33323 / DSM 20243 / BCRC 14619 / CIP 102991 / JCM 1131 / KCTC 3163 / NCIMB 11718 / NCTC 13722 / AM63) protein is Putative membrane protein insertion efficiency factor.